Here is a 367-residue protein sequence, read N- to C-terminus: Apurinic-apyrimidinic endonuclease 1 (367 aa).

Residues histidine 83, histidine 123, glutamate 158, aspartate 192, histidine 195, histidine 229, aspartate 242, histidine 244, and glutamate 274 each contribute to the Zn(2+) site. The tract at residues 312-367 (DTLQKLGAKSRKEQLDKFEVKQKKRAGGTKRKKATAEPSDNDILSQMTKKRKTKKE) is disordered. Residues 321–332 (SRKEQLDKFEVK) are compositionally biased toward basic and acidic residues. Over residues 333-344 (QKKRAGGTKRKK) the composition is skewed to basic residues. Position 356 is a phosphoserine (serine 356).

It belongs to the AP endonuclease 2 family. Monomer. The cofactor is Zn(2+).

The protein localises to the nucleus. Functionally, DNA repair enzyme that cleaves apurinic/apyrimidinic (AP) sites and removes 3'-blocking groups present at single strand breaks of damaged DNA. APN1 accounts for &gt; 97% of both apurinic/apyrimidinic (AP) endonuclease and DNA 3'-repair diesterase activities. This chain is Apurinic-apyrimidinic endonuclease 1 (APN1), found in Saccharomyces cerevisiae (strain ATCC 204508 / S288c) (Baker's yeast).